The following is a 172-amino-acid chain: Monopolar attachment protein 1 (172 aa).

A compositionally biased stretch (basic residues) spans 15–30 (KKNKNPKISNSKKKNS). Residues 15 to 43 (KKNKNPKISNSKKKNSTRPALQDKTNQTL) form a disordered region. Positions 31–43 (TRPALQDKTNQTL) are enriched in polar residues. Positions 100-102 (STP) match the POLO box domain (PBD)-binding motif.

As to quaternary structure, interacts with rec8, Interacts with plo1.

The protein localises to the nucleus. The protein resides in the chromosome. It localises to the centromere. It is found in the kinetochore. In terms of biological role, plays an important role in chromosome segregation during meiosis I by allowing meiotic rec8 to establish cohesion at the centromeric central core and thereby promote the side-by-side structure of kinetochores at meiosis I. Enables monopolar attachment during meiosis I. Required to facilitate kinetochore mono-orientation during meiosis I, when kinetochores on sister chromosomes face the same direction and are thus captured and pulled by spindle fibers from the same pole. Acts in collaboration with plo1. This Schizosaccharomyces pombe (strain 972 / ATCC 24843) (Fission yeast) protein is Monopolar attachment protein 1 (moa1).